We begin with the raw amino-acid sequence, 428 residues long: Autophagy-related protein 14 (428 aa).

Residues 82-143 adopt a coiled-coil conformation; sequence QEAIDRTAEI…RKKQLDKVKD (62 aa).

The protein belongs to the ATG14 family. As to quaternary structure, component of the autophagy-specific VPS34 PI3-kinase complex I.

The protein resides in the preautophagosomal structure membrane. It is found in the vacuole membrane. Required for cytoplasm to vacuole transport (Cvt) and autophagy as a part of the autophagy-specific VPS34 PI3-kinase complex I. This complex is essential to recruit the ATG8-phosphatidylinositol conjugate and the ATG12-ATG5 conjugate to the pre-autophagosomal structure. ATG14 mediates the specific binding of the VPS34 PI3-kinase complex I to the preautophagosomal structure (PAS). Plays a crucial role in hyphal development, conidiogenesis and pathogenicity. Also required for glycogen mobilization, quantity of lipid bodies, and the turgor pressure of appressoria. This is Autophagy-related protein 14 from Pyricularia oryzae (strain 70-15 / ATCC MYA-4617 / FGSC 8958) (Rice blast fungus).